Here is a 144-residue protein sequence, read N- to C-terminus: Large ribosomal subunit protein uL15 (144 aa).

Positions 1 to 54 (MRLNTLSPAAGSKHAPKRVGRGMGSGLGKTAGRGHKGQKSRSGGGVRPGFEGGQ) are disordered. 2 stretches are compositionally biased toward gly residues: residues 21–31 (RGMGSGLGKTA) and 42–52 (SGGGVRPGFEG).

This sequence belongs to the universal ribosomal protein uL15 family. As to quaternary structure, part of the 50S ribosomal subunit.

Binds to the 23S rRNA. In Shewanella baltica (strain OS223), this protein is Large ribosomal subunit protein uL15.